A 525-amino-acid polypeptide reads, in one-letter code: Lysine--tRNA ligase (525 aa).

Positions 40-48 match the 'HIGH' region motif; that stretch reads ASGIPHMGS. The 'KMSKS' region motif lies at 295–299; sequence KISKS. Lysine 298 is an ATP binding site.

The protein belongs to the class-I aminoacyl-tRNA synthetase family.

It localises to the cytoplasm. It carries out the reaction tRNA(Lys) + L-lysine + ATP = L-lysyl-tRNA(Lys) + AMP + diphosphate. The chain is Lysine--tRNA ligase (lysS) from Cenarchaeum symbiosum (strain A).